A 397-amino-acid chain; its full sequence is 1-deoxy-D-xylulose 5-phosphate reductoisomerase (397 aa).

NADPH-binding residues include threonine 10, glycine 11, serine 12, isoleucine 13, glycine 36, asparagine 38, and asparagine 124. 1-deoxy-D-xylulose 5-phosphate is bound at residue lysine 125. Residue glutamate 126 participates in NADPH binding. Residue aspartate 150 coordinates Mn(2+). Residues serine 151, glutamate 152, serine 186, and histidine 209 each contribute to the 1-deoxy-D-xylulose 5-phosphate site. Glutamate 152 lines the Mn(2+) pocket. Glycine 215 contributes to the NADPH binding site. 1-deoxy-D-xylulose 5-phosphate contacts are provided by serine 222, asparagine 227, lysine 228, and glutamate 231. A Mn(2+)-binding site is contributed by glutamate 231.

It belongs to the DXR family. Requires Mg(2+) as cofactor. It depends on Mn(2+) as a cofactor.

It carries out the reaction 2-C-methyl-D-erythritol 4-phosphate + NADP(+) = 1-deoxy-D-xylulose 5-phosphate + NADPH + H(+). The protein operates within isoprenoid biosynthesis; isopentenyl diphosphate biosynthesis via DXP pathway; isopentenyl diphosphate from 1-deoxy-D-xylulose 5-phosphate: step 1/6. In terms of biological role, catalyzes the NADPH-dependent rearrangement and reduction of 1-deoxy-D-xylulose-5-phosphate (DXP) to 2-C-methyl-D-erythritol 4-phosphate (MEP). The chain is 1-deoxy-D-xylulose 5-phosphate reductoisomerase from Photobacterium profundum (strain SS9).